The primary structure comprises 144 residues: Putative RNase YutE (144 aa).

R96 is a catalytic residue. Residues 96–103 (RKTLVQQY) carry the RX(4)HXY motif motif.

The protein belongs to the HepT RNase toxin family. Homodimer, probably forms a complex with cognate antitoxin YutD.

Its function is as follows. Probable toxic component of a putative type VII toxin-antitoxin (TA) system, probably an RNase. Probably neutralized by cognate antitoxin YutD. The polypeptide is Putative RNase YutE (yutE) (Bacillus subtilis (strain 168)).